The following is a 592-amino-acid chain: UvrABC system protein C (592 aa).

The GIY-YIG domain maps to 15–92; that stretch reads ALPGCYLMKD…IQKHQPYFNI (78 aa). The UVR domain maps to 197–232; the sequence is DNVKKDLTEKMATAAQEMQFERAAELRDQLRYIEAT.

This sequence belongs to the UvrC family. As to quaternary structure, interacts with UvrB in an incision complex.

Its subcellular location is the cytoplasm. The UvrABC repair system catalyzes the recognition and processing of DNA lesions. UvrC both incises the 5' and 3' sides of the lesion. The N-terminal half is responsible for the 3' incision and the C-terminal half is responsible for the 5' incision. In Latilactobacillus sakei subsp. sakei (strain 23K) (Lactobacillus sakei subsp. sakei), this protein is UvrABC system protein C.